A 99-amino-acid chain; its full sequence is Apolipoprotein C-III (99 aa).

The N-terminal stretch at methionine 1–alanine 20 is a signal peptide. At methionine 63 the chain carries Methionine sulfoxide. A lipid-binding region spans residues arginine 68 to serine 99. O-linked (GalNAc...) threonine glycosylation is present at threonine 94.

It belongs to the apolipoprotein C3 family. In terms of processing, the most abundant glycoforms are characterized by an O-linked disaccharide galactose linked to N-acetylgalactosamine (Gal-GalNAc), further modified with up to 3 sialic acid residues. Less abundant glycoforms are characterized by more complex and fucosylated glycan moieties. O-glycosylated on Thr-94 with a core 1 or possibly core 8 glycan.

The protein resides in the secreted. Its function is as follows. Component of triglyceride-rich very low density lipoproteins (VLDL) and high density lipoproteins (HDL) in plasma. Plays a multifaceted role in triglyceride homeostasis. Intracellularly, promotes hepatic very low density lipoprotein 1 (VLDL1) assembly and secretion; extracellularly, attenuates hydrolysis and clearance of triglyceride-rich lipoproteins (TRLs). Impairs the lipolysis of TRLs by inhibiting lipoprotein lipase and the hepatic uptake of TRLs by remnant receptors. Formed of several curved helices connected via semiflexible hinges, so that it can wrap tightly around the curved micelle surface and easily adapt to the different diameters of its natural binding partners. This chain is Apolipoprotein C-III (Apoc3), found in Mus musculus (Mouse).